The primary structure comprises 384 residues: Na(+)/H(+) antiporter NhaA (384 aa).

Helical transmembrane passes span 9 to 29 (NLET…IIIA), 58 to 78 (LLLW…GLEI), 94 to 114 (LVPA…FIFF), 124 to 144 (GWAI…SLLG), 153 to 173 (ILLT…IALF), 179 to 199 (SLLS…LNYF), 204 to 224 (ISVF…SGVH), 256 to 276 (VVFL…FVGL), 285 to 305 (VVLG…FLSL), 325 to 345 (VYGI…IGSL), and 357 to 377 (MVKI…FLVL).

It belongs to the NhaA Na(+)/H(+) (TC 2.A.33) antiporter family.

It is found in the cell inner membrane. The enzyme catalyses Na(+)(in) + 2 H(+)(out) = Na(+)(out) + 2 H(+)(in). In terms of biological role, na(+)/H(+) antiporter that extrudes sodium in exchange for external protons. This chain is Na(+)/H(+) antiporter NhaA, found in Legionella pneumophila (strain Lens).